A 726-amino-acid polypeptide reads, in one-letter code: ATP-dependent permease MDL1, mitochondrial (726 aa).

The N-terminal 112 residues, 1-112, are a transit peptide targeting the mitochondrion; the sequence is MDPIRFGLSR…LAFLKLCVRH (112 aa). 3 N-linked (GlcNAc...) asparagine glycosylation sites follow: Asn66, Asn113, and Asn132. A run of 5 helical transmembrane segments spans residues 158-178, 196-216, 306-326, 386-406, and 423-443; these read FFIA…IPYI, IMGI…FLGS, GYMS…GEYV, GIFF…ILAL, and SFLL…GCFT. One can recognise an ABC transmembrane type-1 domain in the interval 158 to 447; that stretch reads FFIAGSLLLV…LSGCFTDIMK (290 aa). The ABC transporter domain occupies 482 to 719; it reads LSFRNVGFAY…GTNFYKLMRW (238 aa). The N-linked (GlcNAc...) asparagine glycan is linked to Asn502. Residue 517-524 participates in ATP binding; it reads APSGGGKS. N-linked (GlcNAc...) asparagine glycosylation is found at Asn584, Asn598, and Asn668.

Belongs to the ABC transporter superfamily. ABCB family. Mitochondrial peptide exporter (TC 3.A.1.212) subfamily.

The protein resides in the mitochondrion inner membrane. Its function is as follows. Mediates export of peptides generated upon proteolysis of mitochondrial inner membrane proteins. The chain is ATP-dependent permease MDL1, mitochondrial (mdl1) from Schizosaccharomyces pombe (strain 972 / ATCC 24843) (Fission yeast).